The sequence spans 182 residues: Epididymal-specific lipocalin-10 (182 aa).

A signal peptide spans 1-19 (MKLEMALSIALALAVVSWT). Residues Asn-31 and Asn-144 are each glycosylated (N-linked (GlcNAc...) asparagine). Cys-85 and Cys-176 are disulfide-bonded. Lys-165 is modified (N6-acetyllysine).

It belongs to the calycin superfamily. Lipocalin family. In terms of tissue distribution, expressed in epididymis.

It localises to the secreted. In terms of biological role, may play a role in male fertility. May act as a retinoid carrier protein within the epididymis. In Mus musculus (Mouse), this protein is Epididymal-specific lipocalin-10 (Lcn10).